Reading from the N-terminus, the 183-residue chain is Probable chorismate pyruvate-lyase (183 aa).

Substrate-binding residues include Arg79, Leu115, and Glu168.

This sequence belongs to the UbiC family.

It is found in the cytoplasm. It catalyses the reaction chorismate = 4-hydroxybenzoate + pyruvate. It participates in cofactor biosynthesis; ubiquinone biosynthesis. Removes the pyruvyl group from chorismate, with concomitant aromatization of the ring, to provide 4-hydroxybenzoate (4HB) for the ubiquinone pathway. The protein is Probable chorismate pyruvate-lyase of Chromohalobacter salexigens (strain ATCC BAA-138 / DSM 3043 / CIP 106854 / NCIMB 13768 / 1H11).